We begin with the raw amino-acid sequence, 123 residues long: Large ribosomal subunit protein bL12 (123 aa).

This sequence belongs to the bacterial ribosomal protein bL12 family. In terms of assembly, homodimer. Part of the ribosomal stalk of the 50S ribosomal subunit. Forms a multimeric L10(L12)X complex, where L10 forms an elongated spine to which 2 to 4 L12 dimers bind in a sequential fashion. Binds GTP-bound translation factors.

Functionally, forms part of the ribosomal stalk which helps the ribosome interact with GTP-bound translation factors. Is thus essential for accurate translation. This chain is Large ribosomal subunit protein bL12, found in Neisseria meningitidis serogroup C (strain 053442).